Consider the following 234-residue polypeptide: Segregation and condensation protein A (234 aa).

This sequence belongs to the ScpA family. In terms of assembly, component of a cohesin-like complex composed of ScpA, ScpB and the Smc homodimer, in which ScpA and ScpB bind to the head domain of Smc. The presence of the three proteins is required for the association of the complex with DNA.

The protein resides in the cytoplasm. Participates in chromosomal partition during cell division. May act via the formation of a condensin-like complex containing Smc and ScpB that pull DNA away from mid-cell into both cell halves. This chain is Segregation and condensation protein A, found in Streptococcus pyogenes serotype M5 (strain Manfredo).